Here is a 71-residue protein sequence, read N- to C-terminus: MPIVKVRENEPFEVALRRFKRSCEKAGVLSEIRRREHYEKPTQERKRKAAAAVKRHMKRLSREQARRRRLY.

Residues 37 to 71 (HYEKPTQERKRKAAAAVKRHMKRLSREQARRRRLY) are disordered. The span at 45–71 (RKRKAAAAVKRHMKRLSREQARRRRLY) shows a compositional bias: basic residues.

It belongs to the bacterial ribosomal protein bS21 family.

The chain is Small ribosomal subunit protein bS21 from Alkalilimnicola ehrlichii (strain ATCC BAA-1101 / DSM 17681 / MLHE-1).